The following is a 1482-amino-acid chain: Calcium-dependent protein kinase 6 (1482 aa).

Disordered stretches follow at residues 250–320 and 739–760; these read TNNY…IRPN and SENFSNNFNDNKQKSLKNDDSN. Positions 254–264 are enriched in polar residues; the sequence is AHDNNQDSNSY. Acidic residues predominate over residues 277–301; that stretch reads EEDNDTGDTYADNEEDEDNRDDNDD. The span at 302 to 318 shows a compositional bias: polar residues; the sequence is YSQYNQCEVESDTNQIR. Residues 739-748 are compositionally biased toward low complexity; that stretch reads SENFSNNFND. Positions 749–760 are enriched in basic and acidic residues; it reads NKQKSLKNDDSN. EF-hand domains lie at 931 to 966 and 972 to 1007; these read IFERSARATFKQFDVKNKNFLHFSEIESLIQKLCYN and VDKKILSIVYKDYDSSKNNCMNYMDFRQMYWDLLKQ. The Ca(2+) site is built by D985, S987, N989, C991, and D996. A Protein kinase domain is found at 1043 to 1295; sequence LSFKKILGCG…AAVLLHHPWF (253 aa). ATP contacts are provided by residues 1049–1057 and K1072; that span reads LGCGAFGEV. D1162 serves as the catalytic Proton acceptor. EF-hand domains follow at residues 1338–1373, 1376–1406, 1407–1442, and 1468–1482; these read NHVKYINDIFLKIDSNHNGSLSHREIYNVLSNAGVK, DINRIIQALDVNDKGCITYTEFIAGCYRWKN, IDSTFLKAAFNKIDKDEDGYISKSDLATLVHDNGVN, and KISFEDFKDYMLSTF. Ca(2+) contacts are provided by D1351, N1353, N1355, S1357, and E1362. D1420, D1422, D1424, Y1426, and D1431 together coordinate Ca(2+).

The protein belongs to the protein kinase superfamily. Ser/Thr protein kinase family. CDPK subfamily. The cofactor is Mg(2+).

The enzyme catalyses L-seryl-[protein] + ATP = O-phospho-L-seryl-[protein] + ADP + H(+). The catalysed reaction is L-threonyl-[protein] + ATP = O-phospho-L-threonyl-[protein] + ADP + H(+). With respect to regulation, activated by calcium. Functionally, calcium-dependent protein kinase which acts as a sensor and effector of intracellular Ca(2+) levels. In sporozoites, probably involved in the secretion of the cysteine protease that cleaves circumsporozoite protein CSP, thereby exposing CSP TSR domain, which binds with high affinity to highly sulfated heparan sulfate proteoglycans (HSPGs), resulting in productive invasion of the host hepatocytes. This is Calcium-dependent protein kinase 6 from Plasmodium berghei (strain Anka).